Reading from the N-terminus, the 214-residue chain is LexA repressor (214 aa).

Positions isoleucine 28–arginine 48 form a DNA-binding region, H-T-H motif. Residues serine 133 and lysine 172 each act as for autocatalytic cleavage activity in the active site.

Belongs to the peptidase S24 family. As to quaternary structure, homodimer.

It catalyses the reaction Hydrolysis of Ala-|-Gly bond in repressor LexA.. Its function is as follows. Represses a number of genes involved in the response to DNA damage (SOS response), including recA and lexA. In the presence of single-stranded DNA, RecA interacts with LexA causing an autocatalytic cleavage which disrupts the DNA-binding part of LexA, leading to derepression of the SOS regulon and eventually DNA repair. This is LexA repressor from Herpetosiphon aurantiacus (strain ATCC 23779 / DSM 785 / 114-95).